The chain runs to 1157 residues: Pesticidal crystal protein Cry9Ca (1157 aa).

This sequence belongs to the delta endotoxin family.

Functionally, promotes colloidosmotic lysis by binding to the midgut epithelial cells of Lepidoptera larvae. Has a fairly broad spectrum of activity against members of the Pyralidae, Plutellidae, Sphingidae and Noctuidae families. It was the first insecticidal crystal protein characterized with activity against cutworms. No activity is observed against some beetles, such as the Colorado potato beetle. This chain is Pesticidal crystal protein Cry9Ca (cry9Ca), found in Bacillus thuringiensis subsp. tolworthi.